The chain runs to 655 residues: Fidgetin-like protein 1 (655 aa).

Positions 289 to 313 (QQKKHSNQPQRNPGPLYGGGKKSLG) are disordered. ATP is bound by residues Ala385 and 425-430 (GTGKTL).

This sequence belongs to the AAA ATPase family. In terms of assembly, hexamer. The cofactor is Mg(2+).

It localises to the nucleus. It is found in the cytoplasm. Its subcellular location is the perinuclear region. The enzyme catalyses ATP + H2O = ADP + phosphate + H(+). Functionally, may be involved in DNA double-strand break (DBS) repair via homologous recombination (HR). May regulate osteoblast proliferation and differentiation. This chain is Fidgetin-like protein 1 (fignl1), found in Xenopus laevis (African clawed frog).